A 537-amino-acid chain; its full sequence is Copine-3 (537 aa).

C2 domains lie at 1 to 115 and 124 to 247; these read MAAQ…TRPL and GKGS…PVEF. Serine 14 bears the Phosphoserine mark. Ca(2+)-binding residues include aspartate 22, aspartate 28, aspartate 81, aspartate 83, aspartate 93, aspartate 154, and aspartate 160. Serine 197 carries the phosphoserine modification. The Ca(2+) site is built by aspartate 216, aspartate 218, and aspartate 224. Serine 243 carries the phosphoserine modification. In terms of domain architecture, VWFA spans 291-513; it reads NFTVGVDFTG…AQCVLAEIPQ (223 aa).

The protein belongs to the copine family. In terms of assembly, monomer. Interacts with ERBB2 (preferentially with the tyrosine phosphorylated form); this interaction occurs at the cell membrane and is increased in a growth factor heregulin-dependent manner. Interacts with SHC1; this interaction may mediate the binding of CPNE3 with ERBB2. Interacts with RACK1. The cofactor is Ca(2+). Post-translationally, phosphorylated on serine and threonine residues. In terms of tissue distribution, expressed in breast and weakly in prostate and ovarian tissues. Expressed in neutrophils (at protein level). Widely expressed. Expressed in the brain. Expressed in neutrophil precursors from the bone marrow and peripheral blood. Expressed in primary breast tumors and ovarian endometrioid adenocarcinoma.

It localises to the nucleus. It is found in the cytoplasm. The protein resides in the cell membrane. The protein localises to the cell junction. Its subcellular location is the focal adhesion. Its function is as follows. Calcium-dependent phospholipid-binding protein that plays a role in ERBB2-mediated tumor cell migration in response to growth factor heregulin stimulation. This is Copine-3 from Homo sapiens (Human).